A 171-amino-acid chain; its full sequence is Large ribosomal subunit protein uL10 (171 aa).

It belongs to the universal ribosomal protein uL10 family. In terms of assembly, part of the ribosomal stalk of the 50S ribosomal subunit. The N-terminus interacts with L11 and the large rRNA to form the base of the stalk. The C-terminus forms an elongated spine to which L12 dimers bind in a sequential fashion forming a multimeric L10(L12)X complex.

Forms part of the ribosomal stalk, playing a central role in the interaction of the ribosome with GTP-bound translation factors. The protein is Large ribosomal subunit protein uL10 of Methylocella silvestris (strain DSM 15510 / CIP 108128 / LMG 27833 / NCIMB 13906 / BL2).